A 373-amino-acid chain; its full sequence is Chaperone protein DnaJ (373 aa).

Positions D5 to G70 constitute a J domain. The CR-type zinc finger occupies G134–V212. The Zn(2+) site is built by C147, C150, C164, C167, C186, C189, C200, and C203. CXXCXGXG motif repeat units lie at residues C147–G154, C164–G171, C186–G193, and C200–G207.

This sequence belongs to the DnaJ family. As to quaternary structure, homodimer. The cofactor is Zn(2+).

The protein resides in the cytoplasm. Its function is as follows. Participates actively in the response to hyperosmotic and heat shock by preventing the aggregation of stress-denatured proteins and by disaggregating proteins, also in an autonomous, DnaK-independent fashion. Unfolded proteins bind initially to DnaJ; upon interaction with the DnaJ-bound protein, DnaK hydrolyzes its bound ATP, resulting in the formation of a stable complex. GrpE releases ADP from DnaK; ATP binding to DnaK triggers the release of the substrate protein, thus completing the reaction cycle. Several rounds of ATP-dependent interactions between DnaJ, DnaK and GrpE are required for fully efficient folding. Also involved, together with DnaK and GrpE, in the DNA replication of plasmids through activation of initiation proteins. The sequence is that of Chaperone protein DnaJ from Neisseria gonorrhoeae (strain ATCC 700825 / FA 1090).